Consider the following 163-residue polypeptide: SsrA-binding protein (163 aa).

It belongs to the SmpB family.

The protein localises to the cytoplasm. Required for rescue of stalled ribosomes mediated by trans-translation. Binds to transfer-messenger RNA (tmRNA), required for stable association of tmRNA with ribosomes. tmRNA and SmpB together mimic tRNA shape, replacing the anticodon stem-loop with SmpB. tmRNA is encoded by the ssrA gene; the 2 termini fold to resemble tRNA(Ala) and it encodes a 'tag peptide', a short internal open reading frame. During trans-translation Ala-aminoacylated tmRNA acts like a tRNA, entering the A-site of stalled ribosomes, displacing the stalled mRNA. The ribosome then switches to translate the ORF on the tmRNA; the nascent peptide is terminated with the 'tag peptide' encoded by the tmRNA and targeted for degradation. The ribosome is freed to recommence translation, which seems to be the essential function of trans-translation. The polypeptide is SsrA-binding protein (Shewanella sp. (strain ANA-3)).